A 407-amino-acid polypeptide reads, in one-letter code: MISIKGTGRFLLDNYRIWQRRAFNRPIQLRKGYKVLAIETSCDDTCVSVLDRFSKSAAPNVLANLKDTLDSIDEGGIIPTKAHIHHQARIGPLTERALIESNAREGIDLICVTRGPGMPGSLSGGLDFAKGLAVAWNKPLIGVHHMLGHLLIPRMGTNGKVPQFPFVSLLVSGGHTTFVLSRAIDDHEILCDTIDIAVGDSLDKCGRELGFKGTMIAREMEKFINQDINDQDFALKLEMPSPLKNSASKRNMLSFSFSAFITALRTNLTKLGKTEIQELPEREIRSIAYQVQESVFDHIINKLKHVLKSQPEKFKNVREFVCSGGVSSNQRLRTKLETELGTLNSTSFFNFYYPPMDLCSDNSIMIGWAGIEIWESLRLVSDLDICPIRQWPLNDLLSVDGWRTDQL.

The transit peptide at 1–30 directs the protein to the mitochondrion; it reads MISIKGTGRFLLDNYRIWQRRAFNRPIQLR. Positions 145 and 149 each coordinate a divalent metal cation. Residues 170 to 174, aspartate 203, alanine 217, glutamate 221, 328 to 329, and serine 360 each bind substrate; these read LVSGG and SN. Aspartate 361 lines the a divalent metal cation pocket.

Belongs to the KAE1 / TsaD family. Homodimer. A divalent metal cation is required as a cofactor.

It is found in the mitochondrion. It catalyses the reaction L-threonylcarbamoyladenylate + adenosine(37) in tRNA = N(6)-L-threonylcarbamoyladenosine(37) in tRNA + AMP + H(+). Required for the formation of a threonylcarbamoyl group on adenosine at position 37 (t(6)A37) in mitochondrial tRNAs that read codons beginning with adenine. Probably involved in the transfer of the threonylcarbamoyl moiety of threonylcarbamoyl-AMP (TC-AMP) to the N6 group of A37. Involved in mitochondrial genome maintenance. The protein is tRNA N6-adenosine threonylcarbamoyltransferase, mitochondrial (QRI7) of Saccharomyces cerevisiae (strain ATCC 204508 / S288c) (Baker's yeast).